A 141-amino-acid polypeptide reads, in one-letter code: 16 kDa protein (141 aa).

Residues 100-119 (TVKKSRNSKPSKKKFKERKE) are disordered. Over residues 102-115 (KKSRNSKPSKKKFK) the composition is skewed to basic residues.

The polypeptide is 16 kDa protein (Tobacco rattle virus (strain PLB)).